Here is a 59-residue protein sequence, read N- to C-terminus: Large ribosomal subunit protein uL30 (59 aa).

It belongs to the universal ribosomal protein uL30 family. As to quaternary structure, part of the 50S ribosomal subunit.

In Photorhabdus laumondii subsp. laumondii (strain DSM 15139 / CIP 105565 / TT01) (Photorhabdus luminescens subsp. laumondii), this protein is Large ribosomal subunit protein uL30.